A 147-amino-acid chain; its full sequence is Large ribosomal subunit protein bL9 (147 aa).

Belongs to the bacterial ribosomal protein bL9 family.

In terms of biological role, binds to the 23S rRNA. This Nitratiruptor sp. (strain SB155-2) protein is Large ribosomal subunit protein bL9.